The sequence spans 311 residues: 2-methoxy-6-polyprenyl-1,4-benzoquinol methylase, mitochondrial (311 aa).

A mitochondrion-targeting transit peptide spans 1–29 (MAAGLCPGRALLSRRGGALWALLGTARGR). Residues threonine 100, aspartate 155, and 183–184 (NA) each bind S-adenosyl-L-methionine.

The protein belongs to the class I-like SAM-binding methyltransferase superfamily. MenG/UbiE family. As to quaternary structure, component of a multi-subunit COQ enzyme complex, composed of at least COQ3, COQ4, COQ5, COQ6, COQ7 and COQ9.

The protein resides in the mitochondrion inner membrane. It catalyses the reaction a 2-methoxy-6-(all-trans-polyprenyl)benzene-1,4-diol + S-adenosyl-L-methionine = a 5-methoxy-2-methyl-3-(all-trans-polyprenyl)benzene-1,4-diol + S-adenosyl-L-homocysteine + H(+). Its pathway is cofactor biosynthesis; ubiquinone biosynthesis. Methyltransferase required for the conversion of 2-polyprenyl-6-methoxy-1,4-benzoquinol (DDMQH2) to 2-polyprenyl-3-methyl-6-methoxy-1,4-benzoquinol (DMQH2). The polypeptide is 2-methoxy-6-polyprenyl-1,4-benzoquinol methylase, mitochondrial (Gallus gallus (Chicken)).